The chain runs to 264 residues: Catechol O-methyltransferase B (264 aa).

The signal sequence occupies residues 1–29 (MLGVLLCWCLGASVLLYVLYSWLIPAAVQ). The N-linked (GlcNAc...) asparagine glycan is linked to N31. S-adenosyl-L-methionine is bound by residues V92, S122, E140, and D191. D191 serves as a coordination point for Mg(2+). A substrate-binding site is contributed by K194. 2 residues coordinate Mg(2+): D219 and N220. N220 and E249 together coordinate substrate.

It belongs to the class I-like SAM-binding methyltransferase superfamily. Cation-dependent O-methyltransferase family. Mg(2+) serves as cofactor. Strongly expressed in eye, diencephalon, spinal cord, hindbrain, liver, kidney and telencephalon. Also detected at very low levels in muscle, spleen, anterior gut and heart. In eye, expressed strongly in retina. In brain, expressed in the central part of the telencephalon, the periventricular gray zone of the optic tectum, the periglomerular nucleus, the olfactory bulb, and the region adjacent to the diencephalic ventricle in the hypothalamus. Expressed in gill, with strongest expression in gill filaments nearest the gill arch, and in esophageal epithelium.

It localises to the secreted. It carries out the reaction a catechol + S-adenosyl-L-methionine = a guaiacol + S-adenosyl-L-homocysteine + H(+). In terms of biological role, catalyzes the O-methylation, and thereby the inactivation, of catecholamine neurotransmitters and catechol hormones. The polypeptide is Catechol O-methyltransferase B (Danio rerio (Zebrafish)).